Here is a 361-residue protein sequence, read N- to C-terminus: Putative F-box protein At3g18340 (361 aa).

Positions 1 to 46 (MASGKLPWELEEEILCRLPPGSLVRLRSVCKHWNDLYNDKWFIKKS) constitute an F-box domain.

The chain is Putative F-box protein At3g18340 from Arabidopsis thaliana (Mouse-ear cress).